The sequence spans 237 residues: 1-(5-phosphoribosyl)-5-[(5-phosphoribosylamino)methylideneamino] imidazole-4-carboxamide isomerase (237 aa).

Aspartate 8 acts as the Proton acceptor in catalysis. The active-site Proton donor is the aspartate 130.

This sequence belongs to the HisA/HisF family.

It localises to the cytoplasm. It catalyses the reaction 1-(5-phospho-beta-D-ribosyl)-5-[(5-phospho-beta-D-ribosylamino)methylideneamino]imidazole-4-carboxamide = 5-[(5-phospho-1-deoxy-D-ribulos-1-ylimino)methylamino]-1-(5-phospho-beta-D-ribosyl)imidazole-4-carboxamide. It functions in the pathway amino-acid biosynthesis; L-histidine biosynthesis; L-histidine from 5-phospho-alpha-D-ribose 1-diphosphate: step 4/9. The polypeptide is 1-(5-phosphoribosyl)-5-[(5-phosphoribosylamino)methylideneamino] imidazole-4-carboxamide isomerase (Halothermothrix orenii (strain H 168 / OCM 544 / DSM 9562)).